The chain runs to 163 residues: uncharacterized protein (163 aa).

Residues 101–162 (LESMKVERKP…KMGERILERE (62 aa)) adopt a coiled-coil conformation.

This is an uncharacterized protein from Aquifex aeolicus (strain VF5).